Consider the following 222-residue polypeptide: UPF0758 protein Ppha_0935 (222 aa).

In terms of domain architecture, MPN spans 100 to 222 (KIQAARDVFE…CFSFRESGLL (123 aa)). Zn(2+) is bound by residues histidine 171, histidine 173, and aspartate 184. The JAMM motif signature appears at 171–184 (HNHPSGDVEPSNAD).

It belongs to the UPF0758 family.

The sequence is that of UPF0758 protein Ppha_0935 from Pelodictyon phaeoclathratiforme (strain DSM 5477 / BU-1).